A 192-amino-acid chain; its full sequence is MSSFWSKVKDFVGFGDPLEYEEDGEEYEQVYREENKREEARRATAGTAAAATPTAAAQASDAAPMGSGPARKRVRAGNVIGMPNSGVNEVLVIEPRSFEEAPQIVQHLRDRKSVILNLTLMDSDQAQRSVDFVAGATFAIDGHQERVGDGIFLFTPSSVMISTEMPSQLRQANQAFGGNFRLNPEAPRRAQG.

The disordered stretch occupies residues 15–70 (GDPLEYEEDGEEYEQVYREENKREEARRATAGTAAAATPTAAAQASDAAPMGSGPA). The span at 18–28 (LEYEEDGEEYE) shows a compositional bias: acidic residues. The segment covering 29–42 (QVYREENKREEARR) has biased composition (basic and acidic residues). The span at 43 to 63 (ATAGTAAAATPTAAAQASDAA) shows a compositional bias: low complexity.

The protein belongs to the SepF family. In terms of assembly, homodimer. Interacts with FtsZ.

The protein resides in the cytoplasm. In terms of biological role, cell division protein that is part of the divisome complex and is recruited early to the Z-ring. Probably stimulates Z-ring formation, perhaps through the cross-linking of FtsZ protofilaments. Its function overlaps with FtsA. In Gloeobacter violaceus (strain ATCC 29082 / PCC 7421), this protein is Cell division protein SepF.